The primary structure comprises 376 residues: uncharacterized protein (376 aa).

The Lumenal segment spans residues 1–280 (MPIPIIAHIA…RTPGFRRVVS (280 aa)). 6 residues coordinate NADP(+): Ile-66, Asp-115, Arg-178, Lys-233, Val-270, and Thr-272. Lys-233 serves as the catalytic Lowers pKa of active site Tyr. A helical membrane pass occupies residues 281–301 (FGKVWGLFLYLLLWPFWWLLL). At 302–376 (KGTIHGAQSF…KKKKIKKSKK (75 aa)) the chain is on the cytoplasmic side.

The protein belongs to the short-chain dehydrogenases/reductases (SDR) family.

Its subcellular location is the cytoplasm. It is found in the endoplasmic reticulum membrane. May be involved in lipid metabolism. This is an uncharacterized protein from Schizosaccharomyces pombe (strain 972 / ATCC 24843) (Fission yeast).